The following is a 316-amino-acid chain: Homoserine kinase (316 aa).

This sequence belongs to the pseudomonas-type ThrB family.

The enzyme catalyses L-homoserine + ATP = O-phospho-L-homoserine + ADP + H(+). It participates in amino-acid biosynthesis; L-threonine biosynthesis; L-threonine from L-aspartate: step 4/5. This is Homoserine kinase from Pseudomonas aeruginosa (strain LESB58).